Reading from the N-terminus, the 147-residue chain is HTH-type transcriptional regulator HmrR (147 aa).

Positions 1–69 constitute an HTH merR-type domain; sequence MNIGEASKVS…VEQIKELLAL (69 aa). A DNA-binding region (H-T-H motif) is located at residues 4 to 23; the sequence is GEASKVSGVSSKMIRYYEQI.

As to quaternary structure, homodimer.

Its subcellular location is the cytoplasm. Functionally, regulates the transcription of actP. It detects cytoplasmic copper stress and activates transcription in response to increasing copper concentrations. In the absence of copper, it negatively regulates the transcription of actP. The protein is HTH-type transcriptional regulator HmrR (hmrR) of Sinorhizobium medicae (strain WSM419) (Ensifer medicae).